The primary structure comprises 82 residues: Cytotoxin homolog Clbp-3 (82 aa).

An N-terminal signal peptide occupies residues 1 to 21 (MKTLLLTLVVVTIVCLDLGYT). 4 cysteine pairs are disulfide-bonded: C24-C43, C36-C60, C64-C75, and C76-C81.

The protein belongs to the three-finger toxin family. Short-chain subfamily. Orphan group XV sub-subfamily. In terms of tissue distribution, expressed by the venom gland.

It is found in the secreted. Its subcellular location is the target cell membrane. In terms of biological role, has low cytotoxic activity. The sequence is that of Cytotoxin homolog Clbp-3 from Naja atra (Chinese cobra).